Reading from the N-terminus, the 56-residue chain is Alpha-conotoxin Pn1.2 (56 aa).

Residues 1-16 (MFTVFLLVVLATTVVS) form the signal peptide. Residues 17–39 (FTSDRASDGGNAAMSDLIALTIK) constitute a propeptide that is removed on maturation. Disulfide bonds link Cys-41–Cys-47 and Cys-42–Cys-55. The interval 43–45 (SHP) is ser-Xaa-Pro motif, crucial for potent interaction with nAChR. Cys-55 carries the cysteine amide modification.

Belongs to the conotoxin A superfamily. Non-native isomers 'ribbon' (with disulfide connectivity C1-C4; C2-C3) and 'beads' (with disulfide connectivity C1-C2; C3-C4) also inhibit high voltage-activated (HVA) calcium channel currents in rat DRG neurons (20-30% inhibition at 1 uM toxin). As to expression, expressed by the venom duct.

It localises to the secreted. In terms of biological role, alpha-conotoxins act on postsynaptic membranes, they bind to the nicotinic acetylcholine receptors (nAChR) and thus inhibit them. This toxin inhibits human alpha-7/CHRNA7 and alpha-9-alpha-10/CHRNA9/CHRNA10 AChR (complete inhibition at 3 uM of toxin). In addition, this toxin inhibits high voltage-activated (HVA) calcium channel currents in rat DRG neurons (22% inhibition at 1 uM toxin) probably by activating GABA(B) receptors (GABBR1 and/or GABBR2). This chain is Alpha-conotoxin Pn1.2, found in Conus pennaceus (Feathered cone).